Here is a 353-residue protein sequence, read N- to C-terminus: Sulfate/thiosulfate import ATP-binding protein CysA (353 aa).

In terms of domain architecture, ABC transporter spans 3 to 237 (IQVKNIEKHF…PATPFVFDFL (235 aa)). 35–42 (GPSGCGKT) serves as a coordination point for ATP.

This sequence belongs to the ABC transporter superfamily. Sulfate/tungstate importer (TC 3.A.1.6) family. In terms of assembly, the complex is composed of two ATP-binding proteins (CysA), two transmembrane proteins (CysT and CysW) and a solute-binding protein (CysP).

Its subcellular location is the cell inner membrane. The catalysed reaction is sulfate(out) + ATP + H2O = sulfate(in) + ADP + phosphate + H(+). The enzyme catalyses thiosulfate(out) + ATP + H2O = thiosulfate(in) + ADP + phosphate + H(+). Part of the ABC transporter complex CysAWTP involved in sulfate/thiosulfate import. Responsible for energy coupling to the transport system. In Acinetobacter baylyi (strain ATCC 33305 / BD413 / ADP1), this protein is Sulfate/thiosulfate import ATP-binding protein CysA.